The following is a 740-amino-acid chain: NAD(P)H-quinone oxidoreductase subunit 5, chloroplastic (740 aa).

Helical transmembrane passes span 9–29 (WIIP…LLLI), 39–59 (IWAF…TKLA), 89–109 (IDPL…MVLI), 125–145 (FAYM…PNLI), 147–167 (IHIF…FWFT), 185–205 (GDFG…SFEF), 231–251 (AFLL…HVWL), 259–279 (TPIS…FLVA), 281–301 (LLPL…IGLI), 328–348 (LGYI…FHLI), 355–375 (ALLF…VGYS), 397–417 (TTFF…CFWS), 426–446 (WLYS…TAFY), 548–568 (TMLF…CIGI), 607–627 (FYSV…YGSV), and 719–739 (GRIS…LLLV).

This sequence belongs to the complex I subunit 5 family. As to quaternary structure, NDH is composed of at least 16 different subunits, 5 of which are encoded in the nucleus.

It is found in the plastid. The protein localises to the chloroplast thylakoid membrane. It carries out the reaction a plastoquinone + NADH + (n+1) H(+)(in) = a plastoquinol + NAD(+) + n H(+)(out). The enzyme catalyses a plastoquinone + NADPH + (n+1) H(+)(in) = a plastoquinol + NADP(+) + n H(+)(out). Functionally, NDH shuttles electrons from NAD(P)H:plastoquinone, via FMN and iron-sulfur (Fe-S) centers, to quinones in the photosynthetic chain and possibly in a chloroplast respiratory chain. The immediate electron acceptor for the enzyme in this species is believed to be plastoquinone. Couples the redox reaction to proton translocation, and thus conserves the redox energy in a proton gradient. This is NAD(P)H-quinone oxidoreductase subunit 5, chloroplastic (ndhF) from Nuphar advena (Common spatterdock).